A 117-amino-acid chain; its full sequence is Ribosome-binding factor A (117 aa).

The protein belongs to the RbfA family. In terms of assembly, monomer. Binds 30S ribosomal subunits, but not 50S ribosomal subunits or 70S ribosomes.

The protein localises to the cytoplasm. One of several proteins that assist in the late maturation steps of the functional core of the 30S ribosomal subunit. Associates with free 30S ribosomal subunits (but not with 30S subunits that are part of 70S ribosomes or polysomes). Required for efficient processing of 16S rRNA. May interact with the 5'-terminal helix region of 16S rRNA. In Streptococcus suis (strain 98HAH33), this protein is Ribosome-binding factor A.